The primary structure comprises 117 residues: Non-specific lipid-transfer protein (117 aa).

The signal sequence occupies residues 1–26 (MASSAFVKFTCALVMCMMVAAPLAEA). Intrachain disulfides connect Cys-29–Cys-76, Cys-39–Cys-53, Cys-54–Cys-99, and Cys-74–Cys-113.

Belongs to the plant LTP family.

Functionally, plant non-specific lipid-transfer proteins transfer phospholipids as well as galactolipids across membranes. May play a role in wax or cutin deposition in the cell walls of expanding epidermal cells and certain secretory tissues. Also has fungicide activity. This is Non-specific lipid-transfer protein (IWF1') from Beta vulgaris (Sugar beet).